Reading from the N-terminus, the 594-residue chain is Shugoshin (594 aa).

The stretch at 38–61 forms a coiled coil; that stretch reads KITDMETKVSELVQENVSLRSRLS. Disordered stretches follow at residues 104-178, 201-266, 342-380, and 519-549; these read SGIH…KSSR, QLPI…TNKN, SKIK…RRTR, and TKQQ…RTKQ. Positions 220-240 form a coiled coil; sequence EEESQENKHTKEEREDEGKEN. Over residues 224-239 the composition is skewed to basic and acidic residues; sequence QENKHTKEEREDEGKE. Residues 252 to 261 show a composition bias toward polar residues; that stretch reads SVTNTGTECS. Residues 343–355 are compositionally biased toward basic residues; that stretch reads KIKHSMKHPRTKL. The segment covering 357 to 376 has biased composition (basic and acidic residues); the sequence is GGQDDIMPHTDYDKDDEKRE. Composition is skewed to polar residues over residues 519 to 532 and 539 to 549; these read TKQQ…SDPN and NSNVKPTRTKQ.

The protein belongs to the shugoshin family.

The protein localises to the nucleus. It localises to the chromosome. The protein resides in the centromere. In terms of biological role, plays a central role in chromosome cohesion during cell division by preventing premature dissociation of cohesin complex from centromeres after prophase, when most of cohesin complex dissociates from chromosomes arms. This is Shugoshin (SGO1) from Kluyveromyces lactis (strain ATCC 8585 / CBS 2359 / DSM 70799 / NBRC 1267 / NRRL Y-1140 / WM37) (Yeast).